We begin with the raw amino-acid sequence, 343 residues long: Phosphoribosylformylglycinamidine cyclo-ligase (343 aa).

The protein belongs to the AIR synthase family.

The protein localises to the cytoplasm. The enzyme catalyses 2-formamido-N(1)-(5-O-phospho-beta-D-ribosyl)acetamidine + ATP = 5-amino-1-(5-phospho-beta-D-ribosyl)imidazole + ADP + phosphate + H(+). It functions in the pathway purine metabolism; IMP biosynthesis via de novo pathway; 5-amino-1-(5-phospho-D-ribosyl)imidazole from N(2)-formyl-N(1)-(5-phospho-D-ribosyl)glycinamide: step 2/2. The chain is Phosphoribosylformylglycinamidine cyclo-ligase from Rippkaea orientalis (strain PCC 8801 / RF-1) (Cyanothece sp. (strain PCC 8801)).